The sequence spans 178 residues: Transcriptional repressor NrdR (178 aa).

Residues 1–21 (MRCPFCGHEDTQVKDSRPHED) are disordered. A zinc finger spans residues 3-34 (CPFCGHEDTQVKDSRPHEDGAAIRRRRICAAC). Over residues 7–21 (GHEDTQVKDSRPHED) the composition is skewed to basic and acidic residues. Residues 49 to 139 (LYVVKADDRR…VHWDFRETKD (91 aa)) enclose the ATP-cone domain.

Belongs to the NrdR family. It depends on Zn(2+) as a cofactor.

In terms of biological role, negatively regulates transcription of bacterial ribonucleotide reductase nrd genes and operons by binding to NrdR-boxes. The chain is Transcriptional repressor NrdR from Gluconacetobacter diazotrophicus (strain ATCC 49037 / DSM 5601 / CCUG 37298 / CIP 103539 / LMG 7603 / PAl5).